The chain runs to 687 residues: Glycine--tRNA ligase beta subunit (687 aa).

Belongs to the class-II aminoacyl-tRNA synthetase family. Tetramer of two alpha and two beta subunits.

The protein resides in the cytoplasm. The enzyme catalyses tRNA(Gly) + glycine + ATP = glycyl-tRNA(Gly) + AMP + diphosphate. The polypeptide is Glycine--tRNA ligase beta subunit (Neisseria gonorrhoeae (strain ATCC 700825 / FA 1090)).